The primary structure comprises 927 residues: Translation initiation factor IF-2 (927 aa).

The segment at 27 to 338 is disordered; that stretch reads LGLPVKSHAS…APKPVTERKF (312 aa). A compositionally biased stretch (polar residues) spans 49–69; sequence SFSSSKTKAPTNSVQTNQGVK. 2 stretches are compositionally biased toward basic and acidic residues: residues 70–86 and 101–138; these read TESK…DDKP and FKAE…DRRH. A compositionally biased stretch (low complexity) spans 146-159; that stretch reads GNRNDNRQGQQNNR. Basic and acidic residues-rich tracts occupy residues 160–171, 202–226, and 234–257; these read NKNDGRYADHKQ, YSRH…EQEL, and AQEE…KEIV. Over residues 300-316 the composition is skewed to low complexity; the sequence is NWNNQNQVRNQRNSNWN. The region spanning 428–597 is the tr-type G domain; sequence ERPPVVTIMG…LLVAEMEELK (170 aa). Positions 437 to 444 are G1; that stretch reads GHVDHGKT. Residue 437 to 444 participates in GTP binding; sequence GHVDHGKT. Positions 462-466 are G2; the sequence is GITQH. Residues 483–486 are G3; it reads DTPG. GTP is bound by residues 483–487 and 537–540; these read DTPGH and NKID. A G4 region spans residues 537–540; it reads NKID. The interval 573–575 is G5; that stretch reads SAK.

The protein belongs to the TRAFAC class translation factor GTPase superfamily. Classic translation factor GTPase family. IF-2 subfamily.

It is found in the cytoplasm. Functionally, one of the essential components for the initiation of protein synthesis. Protects formylmethionyl-tRNA from spontaneous hydrolysis and promotes its binding to the 30S ribosomal subunits. Also involved in the hydrolysis of GTP during the formation of the 70S ribosomal complex. The chain is Translation initiation factor IF-2 from Streptococcus agalactiae serotype Ia (strain ATCC 27591 / A909 / CDC SS700).